A 458-amino-acid polypeptide reads, in one-letter code: Light-independent protochlorophyllide reductase subunit N (458 aa).

[4Fe-4S] cluster-binding residues include Cys-22, Cys-47, and Cys-107.

Belongs to the BchN/ChlN family. As to quaternary structure, protochlorophyllide reductase is composed of three subunits; ChlL, ChlN and ChlB. Forms a heterotetramer of two ChlB and two ChlN subunits. Requires [4Fe-4S] cluster as cofactor.

The protein resides in the plastid. It is found in the chloroplast. The enzyme catalyses chlorophyllide a + oxidized 2[4Fe-4S]-[ferredoxin] + 2 ADP + 2 phosphate = protochlorophyllide a + reduced 2[4Fe-4S]-[ferredoxin] + 2 ATP + 2 H2O. It functions in the pathway porphyrin-containing compound metabolism; chlorophyll biosynthesis (light-independent). Component of the dark-operative protochlorophyllide reductase (DPOR) that uses Mg-ATP and reduced ferredoxin to reduce ring D of protochlorophyllide (Pchlide) to form chlorophyllide a (Chlide). This reaction is light-independent. The NB-protein (ChlN-ChlB) is the catalytic component of the complex. The protein is Light-independent protochlorophyllide reductase subunit N of Chaetosphaeridium globosum (Charophycean green alga).